We begin with the raw amino-acid sequence, 33 residues long: Cysteine-rich venom protein (33 aa).

A disordered region spans residues 1–33; that stretch reads NVDFNSESTRRKKKQKEIVDLHNSLRRRVSPTA. Basic residues predominate over residues 24–33; the sequence is SLRRRVSPTA.

Belongs to the CRISP family. Contains 8 disulfide bonds. Expressed by the venom gland.

Its subcellular location is the secreted. In terms of biological role, blocks contraction of smooth muscle elicited by high potassium-induced depolarization, but does not block caffeine-stimulated contraction. May target voltage-gated calcium channels on smooth muscle (Cav). This Naja naja (Indian cobra) protein is Cysteine-rich venom protein.